We begin with the raw amino-acid sequence, 197 residues long: Ribosome biogenesis protein RLP24 (197 aa).

The segment at Gln144–Phe197 is disordered. Residues Val152–Gln178 are compositionally biased toward acidic residues. Over residues Leu185 to Phe197 the composition is skewed to basic residues.

Belongs to the eukaryotic ribosomal protein eL24 family. In terms of assembly, associated with nucleolar and cytoplasmic pre-60S particles. At the end of biogenesis it dissociates from cytoplasmic pre-60S particles and is likely to be exchanged for its ribosomal homolog, RPL24.

The protein localises to the cytoplasm. It is found in the nucleus. Involved in the biogenesis of the 60S ribosomal subunit. Ensures the docking of NOG1 to pre-60S particles. Activates and recruits ATPase AFG2 to cytoplasmic pre-60S ribosomal particles. The chain is Ribosome biogenesis protein RLP24 (RLP24) from Eremothecium gossypii (strain ATCC 10895 / CBS 109.51 / FGSC 9923 / NRRL Y-1056) (Yeast).